Here is a 562-residue protein sequence, read N- to C-terminus: Glucocorticoid modulatory element-binding protein 1 (562 aa).

At alanine 2 the chain carries N-acetylalanine. The region spanning 72–156 (ASSIEANEDM…RKMMDSGQID (85 aa)) is the SAND domain. Cysteine 103 contributes to the Zn(2+) binding site. DNA-binding residues include lysine 129, lysine 133, lysine 136, and arginine 147. Zn(2+) contacts are provided by histidine 160, cysteine 164, and cysteine 168. Residues 311–357 (LDNRRKQVEHGEEQFLYTLADLERQLEEQKKQAQDPRLKSQTVQNVV) are a coiled coil. The interval 360-384 (PVSTPKPPKRPRLQRPASTTVLSPS) is disordered. The segment covering 375–384 (PASTTVLSPS) has biased composition (polar residues).

In terms of assembly, homodimer, and heterodimer of GMEB1 and GMEB2. Interacts with the glucocorticoid receptor (NR3C1) and NCOA2/TIF2. May interact with HSP27 and CREB-binding protein (CBP). Interacts with TRIM63.

Its subcellular location is the nucleus. The protein resides in the cytoplasm. Functionally, trans-acting factor that binds to glucocorticoid modulatory elements (GME) present in the TAT (tyrosine aminotransferase) promoter and increases sensitivity to low concentrations of glucocorticoids. Also binds to the transferrin receptor promoter. The sequence is that of Glucocorticoid modulatory element-binding protein 1 (Gmeb1) from Rattus norvegicus (Rat).